Reading from the N-terminus, the 670-residue chain is MYLLIVFLPLLGSSVAGFFGRFLGSEGTAIMTTTCVSFSSILSLIAFYEVALGASACYLRIAPWISSEMFDASWGFLFDSLTVVMLIVVTFISSLVHLYSISYMSEDPHSPRFMCYLSIFTFFMLMLVTGDNFLQLFLGWEGVGLASYLLIHFWFTRLQADKAAIKAMLVNRVGDFGLALGIFGCFTLFQTVDFSTIFACASAPRNEWIFCNMRLNAITLICILLFIGAVGKSAQIGLHTWLPDAMEGPTPVSALIHAATMVTAGVFMIARCSPLFEYSPTALIVITFAGAMTSFLAATTGILQNDLKRVIAYSTCSQLGYMIFACGISNYSVSVFHLMNHAFFKALLFLSAGSVIHAMSDEQDMRKMGGLASSFPLTYAMMLMGSLSLIGFPFLTGFYSKDVILELAYTKYTISGNFAFWLGSVSVLFTSYYSFRLLFLTFLVPTNSFGRDRLRCHDAPIPMAIPLILLALGSLFVGYLAKDMMIGLGTNFWANSPFVLPKNEILAESEFAAPTITKLIPILFSTSGASLAYNVNLVADQFQRAFQTSTFCNRLYSFFNKRWFFDQVLNDFLVRSFLRFGYSVSFEALDKGAIEILGPYGISYTFRRLAERISQLQSGSVYHYAFAMLLGSTPFVTFSRMWDSLSSWVDSRSSFILLVSSFLINKSSQE.

15 helical membrane-spanning segments follow: residues 3 to 23 (LLIV…GRFL), 36 to 56 (VSFS…GASA), 76 to 96 (FLFD…SSLV), 113 to 133 (FMCY…GDNF), 136 to 156 (LFLG…FWFT), 178 to 198 (LALG…STIF), 218 to 238 (ITLI…QIGL), 250 to 270 (TPVS…FMIA), 283 to 303 (LIVI…TGIL), 319 to 339 (LGYM…FHLM), 340 to 360 (NHAF…HAMS), 375 to 395 (FPLT…FPFL), 425 to 445 (VSVL…FLVP), 461 to 481 (IPMA…GYLA), and 618 to 638 (SGSV…FVTF).

This sequence belongs to the complex I subunit 5 family.

The protein localises to the mitochondrion inner membrane. It catalyses the reaction a ubiquinone + NADH + 5 H(+)(in) = a ubiquinol + NAD(+) + 4 H(+)(out). Functionally, core subunit of the mitochondrial membrane respiratory chain NADH dehydrogenase (Complex I) that is believed to belong to the minimal assembly required for catalysis. Complex I functions in the transfer of electrons from NADH to the respiratory chain. The immediate electron acceptor for the enzyme is believed to be ubiquinone. The chain is NADH-ubiquinone oxidoreductase chain 5 (ND5) from Triticum aestivum (Wheat).